The chain runs to 103 residues: Large ribosomal subunit protein bL36m (103 aa).

This sequence belongs to the bacterial ribosomal protein bL36 family. In terms of assembly, component of the mitochondrial large ribosomal subunit (mt-LSU). Mature mammalian 55S mitochondrial ribosomes consist of a small (28S) and a large (39S) subunit. The 28S small subunit contains a 12S ribosomal RNA (12S mt-rRNA) and 30 different proteins. The 39S large subunit contains a 16S rRNA (16S mt-rRNA), a copy of mitochondrial valine transfer RNA (mt-tRNA(Val)), which plays an integral structural role, and 52 different proteins. bL36m has a zinc binding site.

Its subcellular location is the mitochondrion. The sequence is that of Large ribosomal subunit protein bL36m (MRPL36) from Homo sapiens (Human).